Consider the following 323-residue polypeptide: tRNA U34 carboxymethyltransferase (323 aa).

Carboxy-S-adenosyl-L-methionine-binding positions include Lys91, Trp105, Lys110, Gly130, 181 to 182, Met196, Tyr200, and Arg315; that span reads IE.

It belongs to the class I-like SAM-binding methyltransferase superfamily. CmoB family. As to quaternary structure, homotetramer.

The enzyme catalyses carboxy-S-adenosyl-L-methionine + 5-hydroxyuridine(34) in tRNA = 5-carboxymethoxyuridine(34) in tRNA + S-adenosyl-L-homocysteine + H(+). Catalyzes carboxymethyl transfer from carboxy-S-adenosyl-L-methionine (Cx-SAM) to 5-hydroxyuridine (ho5U) to form 5-carboxymethoxyuridine (cmo5U) at position 34 in tRNAs. The sequence is that of tRNA U34 carboxymethyltransferase from Serratia proteamaculans (strain 568).